A 327-amino-acid chain; its full sequence is MSMMFLYEALRAAIDEEMGKDSNVFIVGEDVGHYGGSYKVTKDLHVKYGDLRVLDAPIAENSFTGMAIGAAMTGLRPIVEGMNMGFMLLAFNQISNNLSMLQYTSGGNFNIPVVIRGPGGIGKQLAAEHSQRLESCFQSIPGLQIVACSTAYNAKGLLKSAIIEKKPILFLEHVLLYNLKGFVPDEEYYLPLDKAEVVRSGSDVTIVTYSRMRYHVLAAVEKLVLNGQDPEIIDLISLKPLDLHTISKSIKKTHKIVIVEECAQTGGIAAELISLINTYLYDELDSPAVRLSSKDVPIPYNGNLEKSTLIQPDQIVDVVTNLLQYKT.

Glu60 lines the thiamine diphosphate pocket. 4 residues coordinate K(+): Val113, Ala161, Ile162, and Glu164.

In terms of assembly, heterodimer of an alpha and a beta chain. Thiamine diphosphate serves as cofactor.

The protein resides in the plastid. It is found in the chloroplast. It catalyses the reaction N(6)-[(R)-lipoyl]-L-lysyl-[protein] + pyruvate + H(+) = N(6)-[(R)-S(8)-acetyldihydrolipoyl]-L-lysyl-[protein] + CO2. In terms of biological role, the pyruvate dehydrogenase complex catalyzes the overall conversion of pyruvate to acetyl-CoA and CO(2). It contains multiple copies of three enzymatic components: pyruvate dehydrogenase (E1), dihydrolipoamide acetyltransferase (E2) and lipoamide dehydrogenase (E3). The protein is Pyruvate dehydrogenase E1 component subunit beta (pdhB) of Cyanidium caldarium (Red alga).